A 1560-amino-acid chain; its full sequence is Tenascin-N (1560 aa).

Residues 1 to 26 form the signal peptide; the sequence is MGLWGMLAFPLGFLLASVLLVASAPA. 3 EGF-like domains span residues 167 to 198, 199 to 229, and 230 to 260; these read DQPT…VDCA, YAAC…EDCS, and EQRC…PDCS. Intrachain disulfides connect cysteine 171-cysteine 181, cysteine 175-cysteine 186, cysteine 188-cysteine 197, cysteine 202-cysteine 212, cysteine 206-cysteine 217, cysteine 219-cysteine 228, cysteine 233-cysteine 243, cysteine 237-cysteine 248, and cysteine 250-cysteine 259. 12 Fibronectin type-III domains span residues 264–353, 354–444, 445–532, 533–622, 623–706, 709–798, 799–882, 885–970, 973–1062, 1063–1144, 1149–1238, and 1239–1325; these read APQG…DLAV, VGTA…TEID, GPTN…TEID, SPEN…IDSP, KNLV…APTD, GPKN…IDSP, GPKN…APTD, SPKN…IDSP, KNLV…TKAP, SPKN…IDPP, and RNLR…VDAR. 2 disordered regions span residues 868 to 888 and 1044 to 1063; these read GTQE…GPKN and GARE…DSPK. Over residues 1044-1061 the composition is skewed to basic and acidic residues; that stretch reads GARESKKANTEGHTDIDS. A Fibrinogen C-terminal domain is found at 1323-1540; that stretch reads DARFPHPSDC…YVELKIRPFG (218 aa). Asparagine 1411 carries N-linked (GlcNAc...) asparagine glycosylation.

It belongs to the tenascin family. As to quaternary structure, homohexamer. As to expression, highest expression in kidney followed by spleen and brain. In brain, highest expression is found in hippocampus, cerebellum and olfactory bulb. Expressed in aortic valve, corneal limbus. Expressed in ribs periosteum. During a fracture repair process, expression increases in cells of newly formed perichondrium/peristeum surrounding the cartalaginous callus.

It is found in the secreted. The protein localises to the extracellular space. Its subcellular location is the extracellular matrix. Its function is as follows. Extracellular matrix protein that seems to be a ligand for ITGA8:ITGB1, ITGAV:ITGB1 and ITGA4:ITGB1. Involved in neurite outgrowth and cell migration in hippocampal explants. During endochondral bone formation, inhibits proliferation and differentiation of proteoblasts mediated by canonical WNT signaling. In tumors, stimulates angiogenesis by elongation, migration and sprouting of endothelial cells. Expressed in most mammary tumors, may facilitate tumorigenesis by supporting the migratory behavior of breast cancer cells. The protein is Tenascin-N of Mus musculus (Mouse).